The primary structure comprises 411 residues: Protrudin (411 aa).

The tract at residues 1-27 is disordered; that stretch reads MQTSEREGSGPELSPSVMPEAPLESPP. The Cytoplasmic portion of the chain corresponds to 1 to 66; the sequence is MQTSEREGSG…AGDGVRYLLR (66 aa). A sufficient for homooligomerization region spans residues 1–92; it reads MQTSEREGSG…LFLTLNEGAW (92 aa). The segment at 1–205 is sufficient for localization to endoplasmic reticulum tubular network and for interactions with REEP1, REEP5, ATL1, ATL2, ATL3 and SPAST; that stretch reads MQTSEREGSG…LYLLPLCWVL (205 aa). Residues 51-64 are necessary for interaction with RAB11A and function in neurite outgrowth; the sequence is LEPLKDAGDGVRYL. Residues 67-87 traverse the membrane as a helical segment; the sequence is WQMPLCSLLTCLGLNVLFLTL. A topological domain (lumenal) is located at residue Asn-88. A helical transmembrane segment spans residues 89–109; sequence EGAWYSVGALMISVPALLGYL. Residues 110–187 are Cytoplasmic-facing; that stretch reads QEVCRARLPE…NPVVSSQFYG (78 aa). The segment at residues 188–208 is an intramembrane region (helical); sequence ALLGTICMLYLLPLCWVLTLL. The Cytoplasmic segment spans residues 209–411; sequence NSTLFLGNVE…CASCNQTLSK (203 aa). The interval 234 to 286 is disordered; it reads MNPKQEEHAFESPPPPDVGGKGGLMDSTPALTPTEDLTPGSVEEAEEAEPDEE. Positions 271-361 are necessary for interaction with KIF5A; it reads TPGSVEEAEE…GCSATFSVLK (91 aa). Positions 276–286 are enriched in acidic residues; that stretch reads EEAEEAEPDEE. Residues 286-292 form a necessary for interaction with VAPA region; it reads EFKDAIE. The FYVE-type zinc finger occupies 344 to 410; sequence TNNFGNCTGC…VCASCNQTLS (67 aa). Residues Cys-350, Cys-353, Cys-366, Cys-369, Cys-374, Cys-377, Cys-402, and Cys-405 each contribute to the Zn(2+) site.

Can form homooligomers (monomers, dimers and tetramers). Interacts with RAB11A (GDP-bound form); regulates RAB11A. Interacts with FKBP8; may negatively regulate ZFYVE27 phosphorylation. Interacts with VAPA (via MSP domain); may regulate ZFYVE27 retention in the endoplasmic reticulum and its function in cell projections formation. Interacts with VAPB (via MSP domain). Interacts with RAB11B (GDP-bound form), REEP1, REEP5, ATL1, ATL2, ATL3, SPAST, SURF4, KIF5A, KIF5B, KIF5C and RTN3. In terms of processing, phosphorylated. Phosphorylation is induced by NGF through the MAPK/ERK pathway and modulates interaction with RAB11A.

Its subcellular location is the recycling endosome membrane. It localises to the endoplasmic reticulum membrane. It is found in the cell projection. The protein resides in the growth cone membrane. Key regulator of RAB11-dependent vesicular trafficking during neurite extension through polarized membrane transport. Promotes axonal elongation and contributes to the establishment of neuronal cell polarity. Involved in nerve growth factor-induced neurite formation in VAPA-dependent manner. Contributes to both the formation and stabilization of the tubular ER network. Involved in ER morphogenesis by regulating the sheet-to-tubule balance and possibly the density of tubule interconnections. Acts as an adapter protein that facilitates the interaction of KIF5A with VAPA, VAPB, SURF4, RAB11A, RAB11B and RTN3 and the ZFYVE27-KIF5A complex contributes to the transport of these proteins in neurons. Can induce formation of neurite-like membrane protrusions in non-neuronal cells in a KIF5A/B-dependent manner. In Pongo abelii (Sumatran orangutan), this protein is Protrudin (ZFYVE27).